Here is a 274-residue protein sequence, read N- to C-terminus: Probable starch degradation products transport system permease protein AmyC (274 aa).

Transmembrane regions (helical) follow at residues 11–31 (LTFLGIVLSLLWISPFYIILV), 73–93 (LIITVFSILIIAIFSSMTAYA), 103–123 (VIIYMIFTVAMLIPFQSVMIP), 139–159 (LVFMYLGFGSSLGVFLYYGAL), 184–204 (IILPLLNPTTITLAVLDIMWI), and 238–258 (WNLGMAGLTIAILPVVIFYFL). One can recognise an ABC transmembrane type-1 domain in the interval 69–259 (FSNTLIITVF…LPVVIFYFLA (191 aa)).

It belongs to the binding-protein-dependent transport system permease family. MalFG subfamily.

Its subcellular location is the cell membrane. Functionally, probably part of a binding-protein-dependent transport system starch degradation products. Probably responsible for the translocation of the substrate across the membrane. The polypeptide is Probable starch degradation products transport system permease protein AmyC (amyC) (Thermoanaerobacterium thermosulfurigenes (Clostridium thermosulfurogenes)).